A 215-amino-acid chain; its full sequence is Thymidylate kinase (215 aa).

11–18 serves as a coordination point for ATP; sequence GIDGAGKS.

The protein belongs to the thymidylate kinase family.

It carries out the reaction dTMP + ATP = dTDP + ADP. In terms of biological role, phosphorylation of dTMP to form dTDP in both de novo and salvage pathways of dTTP synthesis. The polypeptide is Thymidylate kinase (Nitrosomonas europaea (strain ATCC 19718 / CIP 103999 / KCTC 2705 / NBRC 14298)).